Here is a 323-residue protein sequence, read N- to C-terminus: Beta-ketoacyl-[acyl-carrier-protein] synthase III (323 aa).

Residues cysteine 113 and histidine 250 contribute to the active site. Residues 251 to 255 form an ACP-binding region; it reads QANKR. Asparagine 280 is an active-site residue.

Belongs to the thiolase-like superfamily. FabH family. Homodimer.

Its subcellular location is the cytoplasm. The catalysed reaction is malonyl-[ACP] + acetyl-CoA + H(+) = 3-oxobutanoyl-[ACP] + CO2 + CoA. The protein operates within lipid metabolism; fatty acid biosynthesis. Catalyzes the condensation reaction of fatty acid synthesis by the addition to an acyl acceptor of two carbons from malonyl-ACP. Catalyzes the first condensation reaction which initiates fatty acid synthesis and may therefore play a role in governing the total rate of fatty acid production. Possesses both acetoacetyl-ACP synthase and acetyl transacylase activities. Its substrate specificity determines the biosynthesis of branched-chain and/or straight-chain of fatty acids. The protein is Beta-ketoacyl-[acyl-carrier-protein] synthase III of Chelativorans sp. (strain BNC1).